Reading from the N-terminus, the 116-residue chain is Putative oxygen-evolving enhancer protein 1 (116 aa).

Belongs to the PsbO family.

It localises to the plastid. Its subcellular location is the chloroplast thylakoid membrane. In terms of biological role, stabilizes the manganese cluster which is the primary site of water splitting. The protein is Putative oxygen-evolving enhancer protein 1 of Pinus strobus (Eastern white pine).